Consider the following 299-residue polypeptide: Dihydroorotate dehydrogenase B (NAD(+)), catalytic subunit (299 aa).

FMN contacts are provided by residues S21 and 44-45 (KS). Residues K44, 68–72 (NAVGL), and N125 each bind substrate. Residue N125 participates in FMN binding. C128 (nucleophile) is an active-site residue. K163 contacts FMN. 189 to 190 (NT) contributes to the substrate binding site. FMN contacts are provided by residues G214, 240-241 (GG), and 262-263 (GS).

This sequence belongs to the dihydroorotate dehydrogenase family. Type 1 subfamily. As to quaternary structure, heterotetramer of 2 PyrK and 2 PyrD type B subunits. Requires FMN as cofactor.

It is found in the cytoplasm. It catalyses the reaction (S)-dihydroorotate + NAD(+) = orotate + NADH + H(+). The protein operates within pyrimidine metabolism; UMP biosynthesis via de novo pathway; orotate from (S)-dihydroorotate (NAD(+) route): step 1/1. Catalyzes the conversion of dihydroorotate to orotate with NAD(+) as electron acceptor. This chain is Dihydroorotate dehydrogenase B (NAD(+)), catalytic subunit (pyrD), found in Archaeoglobus fulgidus (strain ATCC 49558 / DSM 4304 / JCM 9628 / NBRC 100126 / VC-16).